The following is a 245-amino-acid chain: Hydrolase pyvD (245 aa).

Residues C133, D179, and H211 contribute to the active site.

The protein belongs to the dienelactone hydrolase family.

It functions in the pathway secondary metabolite biosynthesis. Functionally, hydrolase; part of the gene cluster that mediates the biosynthesis of pyranoviolin A, a pyranonigrin analog with a C-3 methoxy group. Initially, the PKS portion of pyvA synthesizes C-10 carbon chain from 5 molecules of malonyl-CoA, which is then condensed with the thiolation (T) domain-bound glycine activated by the adenylation (A) domain. The subsequent chain release by Dieckmann condensation (DKC) could be catalyzed by the TE domain present at the C-terminus of pyvA and/or the alpha/beta hydrolase pyvD, installing the tetramic acid moiety. The FAD-dependent monooxygenase pyvC next epoxidizes one of the olefins of the polyketide part, and the epoxide ring-opening induces the dihydro-gamma-pyrone ring formation. The cytochrome P450 monooxygeanse pyvB would be responsible for the 2 consecutive reactions, in which the dihydro-gamma-pyrone is oxidized to gamma-pyrone and C-7 is hydroxylated to yield pyranonigrin F. Finally, the O-methyltransferase pyvH methylates the C-3 hydroxy group to complete the biosynthesis. This chain is Hydrolase pyvD, found in Aspergillus violaceofuscus (strain CBS 115571).